Reading from the N-terminus, the 413-residue chain is Multifunctional CCA protein (413 aa).

The ATP site is built by G8 and R11. CTP-binding residues include G8 and R11. Residues D21 and D23 each contribute to the Mg(2+) site. Residues R91, R137, and R140 each coordinate ATP. Residues R91, R137, and R140 each contribute to the CTP site. Residues T228–W329 enclose the HD domain.

The protein belongs to the tRNA nucleotidyltransferase/poly(A) polymerase family. Bacterial CCA-adding enzyme type 1 subfamily. In terms of assembly, monomer. Can also form homodimers and oligomers. Requires Mg(2+) as cofactor. It depends on Ni(2+) as a cofactor.

It carries out the reaction a tRNA precursor + 2 CTP + ATP = a tRNA with a 3' CCA end + 3 diphosphate. The catalysed reaction is a tRNA with a 3' CCA end + 2 CTP + ATP = a tRNA with a 3' CCACCA end + 3 diphosphate. Its function is as follows. Catalyzes the addition and repair of the essential 3'-terminal CCA sequence in tRNAs without using a nucleic acid template. Adds these three nucleotides in the order of C, C, and A to the tRNA nucleotide-73, using CTP and ATP as substrates and producing inorganic pyrophosphate. tRNA 3'-terminal CCA addition is required both for tRNA processing and repair. Also involved in tRNA surveillance by mediating tandem CCA addition to generate a CCACCA at the 3' terminus of unstable tRNAs. While stable tRNAs receive only 3'-terminal CCA, unstable tRNAs are marked with CCACCA and rapidly degraded. This chain is Multifunctional CCA protein, found in Enterobacter sp. (strain 638).